Consider the following 448-residue polypeptide: Ribosomal protein uS12 methylthiotransferase RimO (448 aa).

The 111-residue stretch at proline 6 to proline 116 folds into the MTTase N-terminal domain. 6 residues coordinate [4Fe-4S] cluster: cysteine 15, cysteine 51, cysteine 80, cysteine 147, cysteine 151, and cysteine 154. Residues leucine 133 to arginine 371 form the Radical SAM core domain. The 67-residue stretch at alanine 373–glutamate 439 folds into the TRAM domain.

The protein belongs to the methylthiotransferase family. RimO subfamily. [4Fe-4S] cluster is required as a cofactor.

It is found in the cytoplasm. It carries out the reaction L-aspartate(89)-[ribosomal protein uS12]-hydrogen + (sulfur carrier)-SH + AH2 + 2 S-adenosyl-L-methionine = 3-methylsulfanyl-L-aspartate(89)-[ribosomal protein uS12]-hydrogen + (sulfur carrier)-H + 5'-deoxyadenosine + L-methionine + A + S-adenosyl-L-homocysteine + 2 H(+). Its function is as follows. Catalyzes the methylthiolation of an aspartic acid residue of ribosomal protein uS12. This Paramagnetospirillum magneticum (strain ATCC 700264 / AMB-1) (Magnetospirillum magneticum) protein is Ribosomal protein uS12 methylthiotransferase RimO.